Here is a 217-residue protein sequence, read N- to C-terminus: Adenylate kinase (217 aa).

10 to 15 (GAGKGT) contributes to the ATP binding site. The NMP stretch occupies residues 30–59 (STGDMFRAAMKNETELGLKAKSYMDAGELV). Residues Thr-31, Arg-36, 57-59 (ELV), 85-88 (GFPR), and Gln-92 contribute to the AMP site. The interval 126 to 163 (GRRVSPTSGRTYHVIFNPPKVEGICDVDGSELIQRDDD) is LID. Residues Arg-127 and 136–137 (TY) contribute to the ATP site. AMP is bound by residues Arg-160 and Arg-171. Position 199 (Gln-199) interacts with ATP.

This sequence belongs to the adenylate kinase family. In terms of assembly, monomer.

It localises to the cytoplasm. The enzyme catalyses AMP + ATP = 2 ADP. It participates in purine metabolism; AMP biosynthesis via salvage pathway; AMP from ADP: step 1/1. Catalyzes the reversible transfer of the terminal phosphate group between ATP and AMP. Plays an important role in cellular energy homeostasis and in adenine nucleotide metabolism. The sequence is that of Adenylate kinase from Halalkalibacterium halodurans (strain ATCC BAA-125 / DSM 18197 / FERM 7344 / JCM 9153 / C-125) (Bacillus halodurans).